A 180-amino-acid chain; its full sequence is Putative manganese efflux pump MntP (180 aa).

The next 6 helical transmembrane spans lie at 6–26 (LMAL…GIGL), 34–54 (ILQI…TGWL), 67–87 (AAVI…WAAW), 102–122 (FWGL…AGFT), 131–151 (LLAA…GLVF), and 160–180 (GERA…KLFF).

It belongs to the MntP (TC 9.B.29) family.

The protein resides in the cell membrane. Its function is as follows. Probably functions as a manganese efflux pump. This chain is Putative manganese efflux pump MntP, found in Pelotomaculum thermopropionicum (strain DSM 13744 / JCM 10971 / SI).